Reading from the N-terminus, the 261-residue chain is Small ribosomal subunit protein mS23 (261 aa).

The tract at residues 228-261 (EQRAAAFTGAPEIPSTEDSLGLEEGVEEKQPQQA) is disordered.

It belongs to the mitochondrion-specific ribosomal protein mS23 family. In terms of assembly, component of the mitochondrial small ribosomal subunit.

It localises to the mitochondrion. In Aspergillus oryzae (strain ATCC 42149 / RIB 40) (Yellow koji mold), this protein is Small ribosomal subunit protein mS23 (rsm25).